The sequence spans 58 residues: MSEIKVGENETIESALRRFKRKCARAGVLSEVRKREHYEKPSVKRKKKSEAARKRKFK.

The disordered stretch occupies residues 36-58; that stretch reads EHYEKPSVKRKKKSEAARKRKFK. Over residues 43 to 58 the composition is skewed to basic residues; the sequence is VKRKKKSEAARKRKFK.

It belongs to the bacterial ribosomal protein bS21 family.

This is Small ribosomal subunit protein bS21 from Clostridium kluyveri (strain NBRC 12016).